The sequence spans 901 residues: Protein translocase subunit SecA (901 aa).

ATP contacts are provided by residues glutamine 87, 105–109 (GEGKT), and aspartate 512. The segment at 858-891 (SHQDDDTAAAAALAAQTGDRKVGRNDPCPCGSGK) is disordered. Residues cysteine 885, cysteine 887, cysteine 896, and histidine 897 each coordinate Zn(2+).

It belongs to the SecA family. Monomer and homodimer. Part of the essential Sec protein translocation apparatus which comprises SecA, SecYEG and auxiliary proteins SecDF-YajC and YidC. Zn(2+) is required as a cofactor.

The protein resides in the cell inner membrane. The protein localises to the cytoplasm. It catalyses the reaction ATP + H2O + cellular proteinSide 1 = ADP + phosphate + cellular proteinSide 2.. In terms of biological role, part of the Sec protein translocase complex. Interacts with the SecYEG preprotein conducting channel. Has a central role in coupling the hydrolysis of ATP to the transfer of proteins into and across the cell membrane, serving both as a receptor for the preprotein-SecB complex and as an ATP-driven molecular motor driving the stepwise translocation of polypeptide chains across the membrane. This Escherichia fergusonii (strain ATCC 35469 / DSM 13698 / CCUG 18766 / IAM 14443 / JCM 21226 / LMG 7866 / NBRC 102419 / NCTC 12128 / CDC 0568-73) protein is Protein translocase subunit SecA.